Here is a 416-residue protein sequence, read N- to C-terminus: Serine hydroxymethyltransferase (416 aa).

(6S)-5,6,7,8-tetrahydrofolate is bound by residues leucine 118 and 122-124; that span reads GHL. Residue lysine 226 is modified to N6-(pyridoxal phosphate)lysine. (6S)-5,6,7,8-tetrahydrofolate-binding positions include glutamate 242 and 350–352; that span reads SPF.

Belongs to the SHMT family. In terms of assembly, homodimer. It depends on pyridoxal 5'-phosphate as a cofactor.

The protein localises to the cytoplasm. It carries out the reaction (6R)-5,10-methylene-5,6,7,8-tetrahydrofolate + glycine + H2O = (6S)-5,6,7,8-tetrahydrofolate + L-serine. Its pathway is one-carbon metabolism; tetrahydrofolate interconversion. The protein operates within amino-acid biosynthesis; glycine biosynthesis; glycine from L-serine: step 1/1. Functionally, catalyzes the reversible interconversion of serine and glycine with tetrahydrofolate (THF) serving as the one-carbon carrier. This reaction serves as the major source of one-carbon groups required for the biosynthesis of purines, thymidylate, methionine, and other important biomolecules. Also exhibits THF-independent aldolase activity toward beta-hydroxyamino acids, producing glycine and aldehydes, via a retro-aldol mechanism. This Helicobacter pylori (strain G27) protein is Serine hydroxymethyltransferase.